Reading from the N-terminus, the 318-residue chain is Phosphate acetyltransferase (318 aa).

Belongs to the phosphate acetyltransferase and butyryltransferase family.

It is found in the cytoplasm. It carries out the reaction acetyl-CoA + phosphate = acetyl phosphate + CoA. It participates in metabolic intermediate biosynthesis; acetyl-CoA biosynthesis; acetyl-CoA from acetate: step 2/2. In Paracoccus denitrificans, this protein is Phosphate acetyltransferase (pta).